A 477-amino-acid chain; its full sequence is Transmembrane and coiled-coil domain protein 3 (477 aa).

Positions 1-24 (MPGSDTALTVDRTYSDPGRHHRCK) are disordered. Ser-46 is subject to Phosphoserine. Coiled-coil stretches lie at residues 63-83 (KVKL…EQIK) and 112-149 (KQVF…NGVT). The disordered stretch occupies residues 234–280 (ASPRAYGGSATIVNKPKYGSDDECSSGTSGSADSNGNQSFGAGGTST). At Ser-253 the chain carries Phosphoserine. The span at 258 to 280 (SSGTSGSADSNGNQSFGAGGTST) shows a compositional bias: polar residues. The stretch at 284–398 (QGKIAKIMEE…KLELHQQEQQ (115 aa)) forms a coiled coil. 2 consecutive transmembrane segments (helical) span residues 409 to 429 (VLLG…LVCV) and 450 to 470 (FFAV…LCAI).

This sequence belongs to the TEX28 family. In terms of assembly, may form homodimers and heterodimers with TMCC2 or TMCC3 via the coiled-coil domains. Interacts with ribosomal proteins RPL4 and RPS6.

Its subcellular location is the endoplasmic reticulum membrane. The protein is Transmembrane and coiled-coil domain protein 3 of Mus musculus (Mouse).